Here is a 183-residue protein sequence, read N- to C-terminus: Peptide deformylase (183 aa).

Residues C110 and H153 each contribute to the Fe cation site. E154 is an active-site residue. H157 lines the Fe cation pocket.

The protein belongs to the polypeptide deformylase family. The cofactor is Fe(2+).

It catalyses the reaction N-terminal N-formyl-L-methionyl-[peptide] + H2O = N-terminal L-methionyl-[peptide] + formate. Functionally, removes the formyl group from the N-terminal Met of newly synthesized proteins. Requires at least a dipeptide for an efficient rate of reaction. N-terminal L-methionine is a prerequisite for activity but the enzyme has broad specificity at other positions. This Oceanobacillus iheyensis (strain DSM 14371 / CIP 107618 / JCM 11309 / KCTC 3954 / HTE831) protein is Peptide deformylase.